The sequence spans 453 residues: Serine/threonine-protein phosphatase 2A regulatory subunit B'' subunit gamma (453 aa).

Residues 1–27 (MDWKDVLRRRLASPNSDPKRKKSEQEL) are disordered. 2 EF-hand domains span residues 273-308 (PSAL…TMTN) and 341-376 (KEPA…IQEL). Residues Asp-286, Asp-288, Asn-290, Met-292, and Glu-297 each coordinate Ca(2+).

Interacts with MCM3AP/GANP, PPP5C, and the phosphatase 2A core enzyme composed of the PPP2CA catalytic subunit and the constant regulatory subunit PPP2R1A. Finds in a complex with ABCB1, TFPI2 and PPP2R3C; leading to the dephosphorylation of ABCB1.

The protein resides in the nucleus. The protein localises to the cytoplasm. Functionally, may regulate MCM3AP phosphorylation through phosphatase recruitment. May act as a negative regulator of ABCB1 expression and function through the dephosphorylation of ABCB1 by TFPI2/PPP2R3C complex. May play a role in the activation-induced cell death of B-cells. The chain is Serine/threonine-protein phosphatase 2A regulatory subunit B'' subunit gamma (Ppp2r3c) from Rattus norvegicus (Rat).